The chain runs to 217 residues: 3,4-dihydroxy-2-butanone 4-phosphate synthase (217 aa).

Residues 37–38 (RE), Asp42, 150–154 (RRGHT), and Glu174 each bind D-ribulose 5-phosphate. Glu38 provides a ligand contact to Mg(2+). A Mg(2+)-binding site is contributed by His153.

Belongs to the DHBP synthase family. As to quaternary structure, homodimer. The cofactor is Mg(2+). Requires Mn(2+) as cofactor.

The enzyme catalyses D-ribulose 5-phosphate = (2S)-2-hydroxy-3-oxobutyl phosphate + formate + H(+). It participates in cofactor biosynthesis; riboflavin biosynthesis; 2-hydroxy-3-oxobutyl phosphate from D-ribulose 5-phosphate: step 1/1. Functionally, catalyzes the conversion of D-ribulose 5-phosphate to formate and 3,4-dihydroxy-2-butanone 4-phosphate. The protein is 3,4-dihydroxy-2-butanone 4-phosphate synthase of Shewanella oneidensis (strain ATCC 700550 / JCM 31522 / CIP 106686 / LMG 19005 / NCIMB 14063 / MR-1).